We begin with the raw amino-acid sequence, 931 residues long: Dipeptidyl aminopeptidase A (931 aa).

Residues 1–13 (MSASTHSHKRKNS) show a composition bias toward basic residues. Residues 1 to 58 (MSASTHSHKRKNSHLFPQRKSSNSSMDKPFFPNNDSVANTDPQSNENGHTINEIRPTE) are disordered. At 1–119 (MSASTHSHKR…GEWSLPEKRS (119 aa)) the chain is on the cytoplasmic side. Over residues 33 to 50 (NNDSVANTDPQSNENGHT) the composition is skewed to polar residues. A helical; Signal-anchor for type II membrane protein transmembrane segment spans residues 120–140 (YVLVFTLIALSVLVLLVILIP). Residues 141–931 (SKLLPTKITR…RFDNTEVLHL (791 aa)) are Lumenal-facing. Residue N377 is glycosylated (N-linked (GlcNAc...) asparagine). Catalysis depends on S785, which acts as the Charge relay system. N-linked (GlcNAc...) asparagine glycosylation occurs at N814. Catalysis depends on charge relay system residues D863 and H896.

It belongs to the peptidase S9B family.

The protein resides in the vacuole membrane. In terms of biological role, responsible for the proteolytic maturation of the alpha-factor precursor. The protein is Dipeptidyl aminopeptidase A (STE13) of Saccharomyces cerevisiae (strain ATCC 204508 / S288c) (Baker's yeast).